Reading from the N-terminus, the 273-residue chain is 2,3,4,5-tetrahydropyridine-2,6-dicarboxylate N-succinyltransferase (273 aa).

2 residues coordinate substrate: R105 and D142.

The protein belongs to the transferase hexapeptide repeat family. As to quaternary structure, homotrimer.

Its subcellular location is the cytoplasm. The enzyme catalyses (S)-2,3,4,5-tetrahydrodipicolinate + succinyl-CoA + H2O = (S)-2-succinylamino-6-oxoheptanedioate + CoA. It functions in the pathway amino-acid biosynthesis; L-lysine biosynthesis via DAP pathway; LL-2,6-diaminopimelate from (S)-tetrahydrodipicolinate (succinylase route): step 1/3. The protein is 2,3,4,5-tetrahydropyridine-2,6-dicarboxylate N-succinyltransferase of Bordetella bronchiseptica (strain ATCC BAA-588 / NCTC 13252 / RB50) (Alcaligenes bronchisepticus).